A 239-amino-acid polypeptide reads, in one-letter code: Ribosomal RNA small subunit methyltransferase G (239 aa).

S-adenosyl-L-methionine is bound by residues Gly76, Phe81, 99–101 (DSS), 128–129 (IE), and Arg147.

It belongs to the methyltransferase superfamily. RNA methyltransferase RsmG family.

It is found in the cytoplasm. Its function is as follows. Specifically methylates the N7 position of a guanine in 16S rRNA. This is Ribosomal RNA small subunit methyltransferase G from Prochlorococcus marinus (strain MIT 9515).